The sequence spans 557 residues: Interferon alpha/beta receptor 1 (557 aa).

Residues 1–27 (MMVVLLGATTLVLVAVAPWVLSAAAGG) form the signal peptide. The Extracellular segment spans residues 28–436 (KNLKSPQKVE…EKTKPGNTSK (409 aa)). 4 Fibronectin type-III domains span residues 32–126 (SPQK…FRKA), 127–227 (QIGP…TVEN), 231–329 (PPEN…TEIQ), and 331–432 (FLLP…TKPG). N-linked (GlcNAc...) asparagine glycans are attached at residues N50, N58, N81, N88, N110, and N172. The cysteines at positions 79 and 87 are disulfide-linked. Residues C199 and C220 are joined by a disulfide bond. A glycan (N-linked (GlcNAc...) asparagine) is linked at N254. C283 and C291 are disulfide-bonded. N-linked (GlcNAc...) asparagine glycosylation is found at N313, N314, N376, N416, and N433. Residues C403 and C426 are joined by a disulfide bond. Residues 437–457 (IWLIVGICIALFALPFVIYAA) traverse the membrane as a helical segment. The Cytoplasmic segment spans residues 458–557 (KVFLRCINYV…TSEELQQDFV (100 aa)). C463 is lipidated: S-palmitoyl cysteine. 2 positions are modified to phosphotyrosine; by TYK2: Y466 and Y481. Positions 491–500 (LLSTSEEQIE) are important for interaction with TYK2. S495 is modified (phosphoserine). Residues K501, K525, and K526 each participate in a glycyl lysine isopeptide (Lys-Gly) (interchain with G-Cter in ubiquitin) cross-link. The segment at 516–557 (ETNQTDEDHKKYSSQTSQDSGNYSNEDESESKTSEELQQDFV) is disordered. A compositionally biased stretch (polar residues) spans 528-539 (SSQTSQDSGNYS). At S535 the chain carries Phosphoserine.

The protein belongs to the type II cytokine receptor family. Heterodimer with IFNAR2; forming the receptor for type I interferon. Interacts with TYK2. Interacts with STAT1 and STAT2; the interaction requires its phosphorylation at Tyr-466. Interacts (serine-phosphorylated form) with FBXW11, the substrate recognition component of a SCF (SKP1-CUL1-F-box protein) E3 ubiquitin-protein ligase complex. Interacts with SHMT2; this promotes interaction with ABRAXAS2 and the BRISC complex. Interacts with TRIM10; this interaction prevents association between IFNAR1 and TYK2. Post-translationally, ubiquitinated, leading to its internalization and degradation. Polyubiquitinated via 'Lys-48'-linked and 'Lys-63'-linked ubiquitin chains, leading to receptor internalization and lysosomal degradation. The 'Lys-63'-linked ubiquitin chains are cleaved off by the BRISC complex. In terms of processing, phosphorylated on tyrosine residues in response to interferon-binding: phosphorylation by TYK2 tyrosine kinase creates docking sites for STAT proteins. Phosphorylated on serine residues in response to interferon binding; this promotes interaction with FBXW11 and ubiquitination. Palmitoylation at Cys-463 is required for the activation of STAT1 and STAT2. In terms of tissue distribution, IFN receptors are present in all tissues and even on the surface of most IFN-resistant cells. Isoform 1, isoform 2 and isoform 3 are expressed in the IFN-alpha sensitive myeloma cell line U266B1. Isoform 2 and isoform 3 are expressed in the IFN-alpha resistant myeloma cell line U266R. Isoform 1 is not expressed in IFN-alpha resistant myeloma cell line U266R.

Its subcellular location is the cell membrane. The protein localises to the late endosome. It localises to the lysosome. Together with IFNAR2, forms the heterodimeric receptor for type I interferons (including interferons alpha, beta, epsilon, omega and kappa). Type I interferon binding activates the JAK-STAT signaling cascade, resulting in transcriptional activation or repression of interferon-regulated genes that encode the effectors of the interferon response. Mechanistically, type I interferon-binding brings the IFNAR1 and IFNAR2 subunits into close proximity with one another, driving their associated Janus kinases (JAKs) (TYK2 bound to IFNAR1 and JAK1 bound to IFNAR2) to cross-phosphorylate one another. The activated kinases phosphorylate specific tyrosine residues on the intracellular domains of IFNAR1 and IFNAR2, forming docking sites for the STAT transcription factors. STAT proteins are then phosphorylated by the JAKs, promoting their translocation into the nucleus to regulate expression of interferon-regulated genes. Can also act independently of IFNAR2: form an active IFNB1 receptor by itself and activate a signaling cascade that does not involve activation of the JAK-STAT pathway. The chain is Interferon alpha/beta receptor 1 (IFNAR1) from Homo sapiens (Human).